Reading from the N-terminus, the 297-residue chain is tRNA dimethylallyltransferase (297 aa).

Glycine 15 to serine 22 is a binding site for ATP. Residue threonine 17–serine 22 participates in substrate binding. 2 interaction with substrate tRNA regions span residues aspartate 40 to glutamine 43 and glutamine 164 to arginine 168.

This sequence belongs to the IPP transferase family. As to quaternary structure, monomer. Mg(2+) is required as a cofactor.

The catalysed reaction is adenosine(37) in tRNA + dimethylallyl diphosphate = N(6)-dimethylallyladenosine(37) in tRNA + diphosphate. Catalyzes the transfer of a dimethylallyl group onto the adenine at position 37 in tRNAs that read codons beginning with uridine, leading to the formation of N6-(dimethylallyl)adenosine (i(6)A). This is tRNA dimethylallyltransferase from Rhizobium leguminosarum bv. trifolii (strain WSM2304).